The sequence spans 570 residues: Molecular chaperone MKKS (570 aa).

ATP is bound at residue 192-199 (GHIILGKS). The tract at residues 198–370 (KSLIVPLKGQ…FHLIPNEATI (173 aa)) is substrate-binding apical domain.

Belongs to the TCP-1 chaperonin family. In terms of assembly, component of a complex composed at least of MKKS, BBS10, BBS12, TCP1, CCT2, CCT3, CCT4, CCT5 and CCT8. Interacts with STUB1. Interacts with BBS2 (via coiled coil domain). Interacts with CCDC28B. Interacts with BBS12. Interacts with SMARCC1, a component of the SWI/SNF complexes; the interaction takes place predominantly in the cytoplasm and may modulate SMARCC1 location. Interacts with DLEC1.

The protein localises to the cytoplasm. The protein resides in the cytoskeleton. It is found in the microtubule organizing center. Its subcellular location is the centrosome. It localises to the cytosol. The protein localises to the nucleus. In terms of biological role, probable molecular chaperone that assists the folding of proteins upon ATP hydrolysis. Plays a role in the assembly of BBSome, a complex involved in ciliogenesis regulating transports vesicles to the cilia. May play a role in protein processing in limb, cardiac and reproductive system development. May play a role in cytokinesis. This chain is Molecular chaperone MKKS (MKKS), found in Pongo abelii (Sumatran orangutan).